A 462-amino-acid chain; its full sequence is MARACSLGLLLLLLLLLRTVVTVSLPVIVVRLNKAALDYVSDIGKAPLQRALQVTISDFMDPSGEVLQSTRVQILDAHVPFFYLKFIAGFGVHLSAAANFTIKVFSVPEPMELVLPVDLLADVHVARDSIGTLVLSVPACSSIFSPAGMLDGSISTSQELLDRVQEHIKADLNNKLCLHVYGLVQDLNVHLGTLIGLSPVGPESQIRYSITSMPTITSNYISLDIGAILSLLGKPILLPMHGAHPFVLPWPLGDAGAMATVGLSQHLFDCALLMLQKAGSLNLEITGQLNSKNNPLNTSVLGQLIPEVAHLFPEPTPLVLKVQLGATPVVTLHTSNSTLQLQPLVEVFAAPSNLALQFLFSLDVMVNLDLQLSVSKAKLRGSTSLLGGFQLSVATSNVGSVDMDQVLTLISTVFQKPLLDHLNALLGMGVVLPRVHNLHYVHSEVLVREGYVVVSSGLAYQH.

Positions M1–T22 are cleaved as a signal peptide. T55 carries the phosphothreonine modification. At S63 the chain carries Phosphoserine. Residue N99 is glycosylated (N-linked (GlcNAc...) asparagine). Cysteines 140 and 177 form a disulfide. Residues N297 and N336 are each glycosylated (N-linked (GlcNAc...) asparagine).

It belongs to the BPI/LBP/Plunc superfamily. BPI/LBP family.

It is found in the secreted. This chain is BPI fold-containing family B member 2 (Bpifb2), found in Mus musculus (Mouse).